The sequence spans 285 residues: HTH-type transcriptional activator AmpR (285 aa).

The 58-residue stretch at 5–62 folds into the HTH lysR-type domain; sequence LPLNALRAFEASARHLSFTRAALELCVTQAAVSQQVRILEDRLNRVLFKRLPRGLEMT. Residues 22-41 constitute a DNA-binding region (H-T-H motif); it reads FTRAALELCVTQAAVSQQVR.

Belongs to the LysR transcriptional regulatory family.

It localises to the cytoplasm. This protein is a positive regulator of gene expression of beta-lactamase (AmpC). This is HTH-type transcriptional activator AmpR (ampR) from Citrobacter koseri (Citrobacter diversus).